We begin with the raw amino-acid sequence, 393 residues long: 2,3,4,5-tetrahydropyridine-2,6-dicarboxylate N-succinyltransferase (393 aa).

Glu261 (acyl-anhydride intermediate) is an active-site residue. Succinyl-CoA contacts are provided by residues Arg263, Gly278, Ser281, Ala304, 319–320 (DA), Gly327, Lys356, and 369–372 (RQDS).

Belongs to the type 2 tetrahydrodipicolinate N-succinyltransferase family. Homotrimer.

The protein localises to the cytoplasm. The enzyme catalyses (S)-2,3,4,5-tetrahydrodipicolinate + succinyl-CoA + H2O = (S)-2-succinylamino-6-oxoheptanedioate + CoA. It participates in amino-acid biosynthesis; L-lysine biosynthesis via DAP pathway; LL-2,6-diaminopimelate from (S)-tetrahydrodipicolinate (succinylase route): step 1/3. Functionally, catalyzes the conversion of the cyclic tetrahydrodipicolinate (THDP) into the acyclic N-succinyl-L-2-amino-6-oxopimelate using succinyl-CoA. In Nitratiruptor sp. (strain SB155-2), this protein is 2,3,4,5-tetrahydropyridine-2,6-dicarboxylate N-succinyltransferase.